The chain runs to 471 residues: Putative multidrug resistance protein MdtD (471 aa).

Topologically, residues 1–11 (MTDLPDSTRWQ) are periplasmic. The chain crosses the membrane as a helical span at residues 12–32 (LWIVAFGFFMQSLDTTIVNTA). Topologically, residues 33–48 (LPSMAQSLGESPLHMH) are cytoplasmic. A helical transmembrane segment spans residues 49–69 (MVIVSYVLTVAVMLPASGWLA). Residues 70-76 (DKVGVRN) lie on the Periplasmic side of the membrane. Residues 77–97 (IFFTAIVLFTLGSLFCALSGT) traverse the membrane as a helical segment. The Cytoplasmic segment spans residues 98-101 (LNEL). The helical transmembrane segment at 102–124 (LLARALQGVGGAMMVPVGRLTVM) threads the bilayer. The Periplasmic portion of the chain corresponds to 125-137 (KIVPREQYMAAMT). A helical transmembrane segment spans residues 138–158 (FVTLPGQVGPLLGPALGGLLV). Topologically, residues 159–164 (EYASWH) are cytoplasmic. Residues 165 to 185 (WIFLINIPVGIIGAIATLMLM) form a helical membrane-spanning segment. Over 186–196 (PNYTMQTRRFD) the chain is Periplasmic. The helical transmembrane segment at 197 to 217 (LSGFLLLAVGMAVLTLALDGS) threads the bilayer. Residues 218 to 224 (KGTGLSP) lie on the Cytoplasmic side of the membrane. A helical membrane pass occupies residues 225 to 245 (LAIAGLVAVGVVALVLYLLHA). Over 246–262 (RNNNRALFSLKLFRTRT) the chain is Periplasmic. The helical transmembrane segment at 263-283 (FSLGLAGSFAGRIGSGMLPFM) threads the bilayer. The Cytoplasmic segment spans residues 284-285 (TP). The chain crosses the membrane as a helical span at residues 286–306 (VFLQIGLGFSPFHAGLMMIPM). Topologically, residues 307–341 (VLGSMGMKRIVVQVVNRFGYRRVLVATTLGLSLVT) are periplasmic. Residues 342–362 (MLFMTTALLGWYYVLPFVLFL) traverse the membrane as a helical segment. The Cytoplasmic segment spans residues 363-395 (QGMVNSTRFSSMNTLTLKDLPDNLASSGNSLLS). A helical membrane pass occupies residues 396 to 416 (MIMQLSMSIGVTIAGLLLGLF). Topologically, residues 417-430 (GSQHVSVDSGTTQT) are periplasmic. Residues 431–451 (VFMYTWLSMAFIIALPAFIFA) traverse the membrane as a helical segment. The Cytoplasmic portion of the chain corresponds to 452 to 471 (RVPNDTHQNVAISRRKRSAQ).

The protein belongs to the major facilitator superfamily. TCR/Tet family.

It localises to the cell inner membrane. This chain is Putative multidrug resistance protein MdtD, found in Escherichia coli O7:K1 (strain IAI39 / ExPEC).